The following is a 418-amino-acid chain: Serine hydroxymethyltransferase (418 aa).

(6S)-5,6,7,8-tetrahydrofolate contacts are provided by residues L121 and 125 to 127 (GHL). The residue at position 230 (K230) is an N6-(pyridoxal phosphate)lysine. 356–358 (SPF) contacts (6S)-5,6,7,8-tetrahydrofolate.

This sequence belongs to the SHMT family. Homodimer. It depends on pyridoxal 5'-phosphate as a cofactor.

Its subcellular location is the cytoplasm. The catalysed reaction is (6R)-5,10-methylene-5,6,7,8-tetrahydrofolate + glycine + H2O = (6S)-5,6,7,8-tetrahydrofolate + L-serine. It functions in the pathway one-carbon metabolism; tetrahydrofolate interconversion. Its pathway is amino-acid biosynthesis; glycine biosynthesis; glycine from L-serine: step 1/1. Functionally, catalyzes the reversible interconversion of serine and glycine with tetrahydrofolate (THF) serving as the one-carbon carrier. This reaction serves as the major source of one-carbon groups required for the biosynthesis of purines, thymidylate, methionine, and other important biomolecules. Also exhibits THF-independent aldolase activity toward beta-hydroxyamino acids, producing glycine and aldehydes, via a retro-aldol mechanism. This chain is Serine hydroxymethyltransferase, found in Shewanella piezotolerans (strain WP3 / JCM 13877).